A 615-amino-acid chain; its full sequence is DNA mismatch repair protein MutL (615 aa).

Residues 363–397 (FAEPAAREPVAPRYTPAPASGSRPAAPWPNAQPGY) are disordered. The span at 364–391 (AEPAAREPVAPRYTPAPASGSRPAAPWP) shows a compositional bias: low complexity.

Belongs to the DNA mismatch repair MutL/HexB family.

This protein is involved in the repair of mismatches in DNA. It is required for dam-dependent methyl-directed DNA mismatch repair. May act as a 'molecular matchmaker', a protein that promotes the formation of a stable complex between two or more DNA-binding proteins in an ATP-dependent manner without itself being part of a final effector complex. In Escherichia coli (strain K12 / MC4100 / BW2952), this protein is DNA mismatch repair protein MutL.